The sequence spans 352 residues: Pejvakin (352 aa).

It belongs to the gasdermin family. Interacts with MAP1LC3B; interaction is direct. Interacts with IQGAP1. Interacts with ROCK2. Interacts with TRIOBP.

It localises to the peroxisome membrane. Its subcellular location is the cell projection. The protein localises to the cilium. Peroxisome-associated protein required to protect auditory hair cells against noise-induced damage. Acts by regulating noise-induced peroxisome proliferation in auditory hair cells and neurons, and promoting autophagic degradation of damaged peroxisomes (pexophagy). Noise overexposure increases reactive oxygen species (ROS) levels, causing oxidative damage to auditory hair cells and resulting in hearing loss. PJVK acts as a ROS sensor that recruits the autophagy machinery to trigger pexophagy of peroxisomes damaged by oxidative stress. In addition to pexophagy, also required to promote peroxisome proliferation in response to sound overstimulation. This Homo sapiens (Human) protein is Pejvakin.